The sequence spans 516 residues: Maturase K (516 aa).

The protein belongs to the intron maturase 2 family. MatK subfamily.

The protein localises to the plastid. The protein resides in the chloroplast. Functionally, usually encoded in the trnK tRNA gene intron. Probably assists in splicing its own and other chloroplast group II introns. The protein is Maturase K of Disporum sessile (Japanese fairy bells).